A 447-amino-acid polypeptide reads, in one-letter code: Protein disulfide-isomerase like 2-2 (447 aa).

The signal sequence occupies residues 1 to 26 (MERKMYKSTVFPICCLLFALFDRGNA). Thioredoxin domains follow at residues 27-139 (LYGS…QIKA) and 161-275 (KKKS…QLES). Active-site nucleophile residues include C62 and C65. Cysteines 62 and 65 form a disulfide. The tract at residues 146-170 (DGKTSGTKNGGGSSEKKKSEPSASV) is disordered. Residue N173 is glycosylated (N-linked (GlcNAc...) asparagine). Active-site nucleophile residues include C197 and C200. C197 and C200 are disulfide-bonded. The Prevents secretion from ER motif lies at 444 to 447 (KDDL).

Belongs to the protein disulfide isomerase family. In terms of tissue distribution, widely expressed.

It is found in the endoplasmic reticulum lumen. It carries out the reaction Catalyzes the rearrangement of -S-S- bonds in proteins.. Its function is as follows. Acts as a protein-folding catalyst that interacts with nascent polypeptides to catalyze the formation, isomerization, and reduction or oxidation of disulfide bonds. The protein is Protein disulfide-isomerase like 2-2 (PDIL2-2) of Arabidopsis thaliana (Mouse-ear cress).